Consider the following 460-residue polypeptide: UDP-N-acetylmuramoylalanine--D-glutamate ligase (460 aa).

120-126 (GSNGKTT) contacts ATP.

The protein belongs to the MurCDEF family.

The protein resides in the cytoplasm. It carries out the reaction UDP-N-acetyl-alpha-D-muramoyl-L-alanine + D-glutamate + ATP = UDP-N-acetyl-alpha-D-muramoyl-L-alanyl-D-glutamate + ADP + phosphate + H(+). Its pathway is cell wall biogenesis; peptidoglycan biosynthesis. Its function is as follows. Cell wall formation. Catalyzes the addition of glutamate to the nucleotide precursor UDP-N-acetylmuramoyl-L-alanine (UMA). The protein is UDP-N-acetylmuramoylalanine--D-glutamate ligase of Lactobacillus delbrueckii subsp. bulgaricus (strain ATCC BAA-365 / Lb-18).